Reading from the N-terminus, the 82-residue chain is MKERMRSRMSKQVLTGVVVGAKCDKTIKVMVSRMVSHKMYKKIVKKRKNYVVHDEYNRYKCGDVVQIREHIPISATKRWVVI.

Belongs to the universal ribosomal protein uS17 family. Part of the 30S ribosomal subunit.

Functionally, one of the primary rRNA binding proteins, it binds specifically to the 5'-end of 16S ribosomal RNA. This Ehrlichia ruminantium (strain Gardel) protein is Small ribosomal subunit protein uS17.